A 62-amino-acid chain; its full sequence is UPF0337 protein gsr0040 (62 aa).

Composition is skewed to basic and acidic residues over residues 1 to 15 (MGID…KDVQ) and 27 to 62 (DDPK…IDNV). The interval 1–62 (MGIDKRAEAT…DQAHRTIDNV (62 aa)) is disordered.

The protein belongs to the UPF0337 (CsbD) family.

The sequence is that of UPF0337 protein gsr0040 from Gloeobacter violaceus (strain ATCC 29082 / PCC 7421).